A 159-amino-acid polypeptide reads, in one-letter code: Cyclic pyranopterin monophosphate synthase (159 aa).

Residues 76 to 78 (LCH) and 114 to 115 (ME) contribute to the substrate site. D129 is a catalytic residue.

Belongs to the MoaC family. Homohexamer; trimer of dimers.

The enzyme catalyses (8S)-3',8-cyclo-7,8-dihydroguanosine 5'-triphosphate = cyclic pyranopterin phosphate + diphosphate. The protein operates within cofactor biosynthesis; molybdopterin biosynthesis. Functionally, catalyzes the conversion of (8S)-3',8-cyclo-7,8-dihydroguanosine 5'-triphosphate to cyclic pyranopterin monophosphate (cPMP). The protein is Cyclic pyranopterin monophosphate synthase of Oleidesulfovibrio alaskensis (strain ATCC BAA-1058 / DSM 17464 / G20) (Desulfovibrio alaskensis).